The chain runs to 337 residues: MLELAYLQTLPQQRALLKADYADFIVKEDLGYAMTGEGEFVALYVRKTDANTLFVGEQLAKFVGLSPRNMGYAGLKDRKAVTEQWFCLQMPGKAMPDFSRFNMAGVEILQVTRHSRKIRTGSLNGNHFEILLRNAVETDELKVRLENIKNFGFPNYFTEQRFGKDGHNLTQAMRWANGEIKVKDRKKRSFYLSAARSEVFNLVVSERIRQGLANQVLAHDILQLAGTHSWFTADGKEDLALLQTRLENHDLQLTAPLIGETQQLACELENKLVERHQSLISLMKRERMKPARRPLLMQARDFHWEFVENGLKLKFYLPAGSYATALVRELVNIDENE.

Catalysis depends on D77, which acts as the Nucleophile. One can recognise a TRUD domain in the interval 152–308 (GFPNYFTEQR…ARDFHWEFVE (157 aa)).

This sequence belongs to the pseudouridine synthase TruD family.

It catalyses the reaction uridine(13) in tRNA = pseudouridine(13) in tRNA. Functionally, responsible for synthesis of pseudouridine from uracil-13 in transfer RNAs. The polypeptide is tRNA pseudouridine synthase D (Mannheimia succiniciproducens (strain KCTC 0769BP / MBEL55E)).